The following is an 89-amino-acid chain: GTP cyclohydrolase 1 feedback regulatory protein (89 aa).

It belongs to the GFRP family. Homopentamer. Forms a complex with GCH1 where a GCH1 homodecamer is sandwiched by two GFRP homopentamers.

It localises to the nucleus. Its subcellular location is the nucleus membrane. The protein resides in the cytoplasm. The protein localises to the cytosol. Its function is as follows. Mediates tetrahydrobiopterin inhibition of GTP cyclohydrolase 1. The protein is GTP cyclohydrolase 1 feedback regulatory protein (gchfr) of Danio rerio (Zebrafish).